Consider the following 63-residue polypeptide: Conotoxin p5a (63 aa).

The first 19 residues, 1 to 19, serve as a signal peptide directing secretion; sequence MRCLPVFVILLLLIPSAPC. Residues 20–50 constitute a propeptide that is removed on maturation; the sequence is VDAHPKTKDDMPLASFHDNAKGTLQRFWKKR. Intrachain disulfides connect Cys52–Cys59 and Cys53–Cys60. Leu62 is subject to Leucine amide.

Expressed by the venom duct.

The protein resides in the secreted. In vivo, low levels of the peptide injected into male specimens of the Siamese fighting fish causes an immediate aggressive display in this fish in response to their reflection when placed in a mirrored aquarium; High levels of the peptide suppressed this behavior. No effect is observed when injected into mice. The chain is Conotoxin p5a from Conus purpurascens (Purple cone).